An 886-amino-acid polypeptide reads, in one-letter code: Interference hedgehog (886 aa).

An N-terminal signal peptide occupies residues 1-20 (MTLLTSSLLLFSLLTSRLEA). Residues 21–709 (IPVLEKSPAH…ETFNMSPMLT (689 aa)) are Extracellular-facing. Residues 29 to 38 (AHPAHSAHPA) are compositionally biased toward low complexity. The disordered stretch occupies residues 29–52 (AHPAHSAHPAHPAHPAHPAHPSPG). Ig-like C2-type domains are found at residues 51–148 (PGVR…IARL), 138–238 (PLVV…ERIQ), 258–346 (PHLL…YIKV), and 352–438 (PQIV…LQVN). 4 disulfides stabilise this stretch: C74-C132, C179-C226, C282-C330, and C373-C420. Residues N108 and N215 are each glycosylated (N-linked (GlcNAc...) asparagine). Positions 432 to 475 (GTLLQVNPKQIQEPRESGGTHRPKPNQGSRQKQMYPPTPPNVTR) are disordered. 2 consecutive Fibronectin type-III domains span residues 467-573 (PPTP…LQPG) and 581-676 (VPEL…TQRP). N-linked (GlcNAc...) asparagine glycosylation occurs at N472. Heparin is bound by residues R503, K507, K509, and R547. A glycan (N-linked (GlcNAc...) asparagine) is linked at N563. The disordered stretch occupies residues 668-697 (LKQGRTQRPKTSTTEEPTLQMGDRDTTTPS). A compositionally biased stretch (polar residues) spans 671 to 684 (GRTQRPKTSTTEEP). N699 is a glycosylation site (N-linked (GlcNAc...) asparagine). The helical transmembrane segment at 710 to 730 (GTIGGGAVLILLLISTCFCVC) threads the bilayer. The Cytoplasmic segment spans residues 731–886 (RRRNSRSRGN…SSGSLNSVGV (156 aa)). Disordered stretches follow at residues 734-768 (NSRS…QRQR) and 781-886 (QQQQ…SVGV). 2 stretches are compositionally biased toward low complexity: residues 829–843 (RAGG…NNNN) and 870–886 (SSRS…SVGV).

It belongs to the immunoglobulin superfamily. IHOG family. Homodimer. Heterotetramer; 2 iHog chains bind 2 hh chains when facilitated by heparin, heparin is required to promote high-affinity interactions between hh and iHog.

Its subcellular location is the membrane. Its function is as follows. Mediates response to the active Hedgehog (Hh) protein signal in embryos, functioning upstream or at the level of patched (ptc). The sequence is that of Interference hedgehog (ihog) from Drosophila melanogaster (Fruit fly).